The chain runs to 457 residues: MTVTVRFAPSPTGRIHIGNARTALFNWLFALNNKGRFIQRFDDTDIGRSKQEFADAILYDLHWLGIFPDATEYQSRRFEVYDAAVERLKAAGVLYACYETPEELDLRRKVRRTRGLPPVYGREALALTHEQVAEYQADGRRPHWRFLLPNFTGDPLQPERTEVHWKDLVRGEETVDLASLSDPVLVREDGTYLYTLPSVVDDIEMGVSHVIRGDDHVTNTGVQIALFKALGTEPPVFGHHNLLTTVSGEGLSKRTGALSIESLREDGIEPMAVASLAVLVGTSENVAAAHDLTELAGHFDPAATSKSSAKFDPDELFVLNRVLMHHMPFDEARDRLMVLGISGEQAEPFWLAVRGNLDRLADAVGWWRILREGPQDRPEFSDDDRDFLGQAFEVLPEEPWNGTVWKDWTGKIREATGRKGKGLFMPLRLALTGLPSGPELADLLPLMGREGTLARRP.

Positions Pro9–Asn19 match the 'HIGH' region motif. The 'KMSKS' region signature appears at Gly250 to Arg254. Residue Lys253 coordinates ATP.

Belongs to the class-I aminoacyl-tRNA synthetase family. Glutamate--tRNA ligase type 1 subfamily. In terms of assembly, monomer.

The protein localises to the cytoplasm. It carries out the reaction tRNA(Glu) + L-glutamate + ATP = L-glutamyl-tRNA(Glu) + AMP + diphosphate. In terms of biological role, catalyzes the attachment of glutamate to tRNA(Glu) in a two-step reaction: glutamate is first activated by ATP to form Glu-AMP and then transferred to the acceptor end of tRNA(Glu). The sequence is that of Glutamate--tRNA ligase 2 from Mesorhizobium japonicum (strain LMG 29417 / CECT 9101 / MAFF 303099) (Mesorhizobium loti (strain MAFF 303099)).